A 257-amino-acid polypeptide reads, in one-letter code: MSIHLVIIDALNLIRRVHSVQSDPTDIARTITTTARTLNRILNESKPTHIIAVFDHHLQDRGWRAEVLPAYKQNRKPMPEPLMKGLDAIQQAWWELGIDSLLSDGDEADDLVATLAKKVADHGETVTIISTDKGYCQLLSPTLQIRDYFQHRWLDKPFIEAEFGVKPEQLADYWGLTGVSSSQVPGIPGIGPKAAKEILTTYPDIETAFLAEDLPKKYRKKFDEHIESARVCKLVSALKTDIDLGFNLQDIRYEAVS.

Residue D109 participates in Mg(2+) binding. Residues 165–254 form the 5'-3' exonuclease domain; sequence VKPEQLADYW…GFNLQDIRYE (90 aa). K(+) contacts are provided by L176, P185, I187, and I190. The segment at 189-194 is interaction with DNA; it reads GIGPKA.

Belongs to the Xni family. Mg(2+) serves as cofactor. It depends on K(+) as a cofactor.

Its function is as follows. Has flap endonuclease activity. During DNA replication, flap endonucleases cleave the 5'-overhanging flap structure that is generated by displacement synthesis when DNA polymerase encounters the 5'-end of a downstream Okazaki fragment. The polypeptide is Flap endonuclease Xni (Vibrio atlanticus (strain LGP32) (Vibrio splendidus (strain Mel32))).